The sequence spans 127 residues: MLKSLLAIGLGAMVGAWLRWGLGMKLNALFPAVPPGTLLANLIGGYIIGLAIAFFSASPSLSPEWRLLLITGFCGGLTTFSTFSAEVVSLIQEGRILWALGSIALHVSGSLLMTAAGLATFYFISGR.

The next 4 membrane-spanning stretches (helical) occupy residues 4 to 24 (SLLA…GLGM), 35 to 55 (PGTL…IAFF), 68 to 88 (LLIT…AEVV), and 96 to 116 (ILWA…MTAA). Positions 75 and 78 each coordinate Na(+).

Belongs to the fluoride channel Fluc/FEX (TC 1.A.43) family.

The protein resides in the cell inner membrane. It catalyses the reaction fluoride(in) = fluoride(out). Its activity is regulated as follows. Na(+) is not transported, but it plays an essential structural role and its presence is essential for fluoride channel function. Functionally, fluoride-specific ion channel. Important for reducing fluoride concentration in the cell, thus reducing its toxicity. The sequence is that of Fluoride-specific ion channel FluC from Pseudomonas putida (strain W619).